The primary structure comprises 205 residues: CMRF35-like molecule 2 (205 aa).

The signal sequence occupies residues 1 to 17 (MWLLPALLLLCLSGCLS). An Ig-like V-type domain is found at 18-120 (LKGPGSVTGT…VLDSWSRDPS (103 aa)). Over 18–173 (LKGPGSVTGT…NSGFRLSSPH (156 aa)) the chain is Extracellular. Residues C36 and C104 are joined by a disulfide bond. Residue N154 is glycosylated (N-linked (GlcNAc...) asparagine). The chain crosses the membrane as a helical span at residues 174–194 (FLLVVLLKLPLLLSMLGAVFW). The Cytoplasmic segment spans residues 195–205 (VNRPQWAPPGR).

Belongs to the CD300 family. In terms of assembly, interacts with TYROBP. N-glycosylated. In terms of tissue distribution, present on the surface of mature hematopoietic cells of the monocyte and myeloid lineages (at protein level).

It localises to the cell membrane. Its function is as follows. Probably acts as an activating receptor. The chain is CMRF35-like molecule 2 (CD300E) from Homo sapiens (Human).